The chain runs to 563 residues: Inclusion body clearance protein IML2 (563 aa).

It belongs to the IML2 family. Interacts with lipid droplet proteins.

The protein resides in the cytoplasm. It localises to the nucleus. Functionally, inclusion body (IB) resident protein that interacts strongly with lipid droplet (LD) proteins. Involved in LD-mediated IB clearing after protein folding stress, probably by enabling access to the IBs of an LD-stored soluble sterol derivative that acts as a chaperone in inclusion clearing. In Schizosaccharomyces pombe (strain 972 / ATCC 24843) (Fission yeast), this protein is Inclusion body clearance protein IML2.